Consider the following 465-residue polypeptide: MEFAAENEGKSGGGLHSVAEGVRLSPEPGREGVRDLAGAEEFGGGEEGKGLTGVKEIGDGEEGSRQRPEEIPMDLTVVKQEIIDWPGTEGRLAGQWVEQEVEDRPEVKDENAGVLEVKQETDSSLVVKEAKVGDLEVKEEVMDSSEVKEEKDNLEIKQEEKFVGQCIKEELMHGECVKEEKDFLKKEIVDDTKVKEEPPINHPVGCKRKLAMSRCETCGTEEAKYRCPRCMRYSCSLPCVKKHKAELTCNGVRDKTAYISIQQFTEMNLLSDYRFLEDVARTADHISRDAFLKRPISNKHMYFMKNRARRQGINLKLLPNGFTKRKENSTFFDKKKQQFCWHVKLQFPQSQAEYIEKRVPDDKTINEILKPYIDPEKSDPVIRQRLKAYIRSQTGVQILMKIEYMQQNLVRYYELDPYKSLLDNLRNKVIIEYPTLHVVLKGSNNDMKVLRQVKSESTKNLGNEN.

Residues 1–72 form a disordered region; sequence MEFAAENEGK…GSRQRPEEIP (72 aa). At Ser25 the chain carries Phosphoserine. Residues 56–70 show a composition bias toward basic and acidic residues; the sequence is EIGDGEEGSRQRPEE. Glycyl lysine isopeptide (Lys-Gly) (interchain with G-Cter in SUMO2) cross-links involve residues Lys79, Lys108, Lys118, Lys138, Lys148, Lys157, Lys168, Lys178, and Lys195. Zn(2+)-binding residues include Cys215, Cys218, Cys227, Cys230, Cys235, Cys239, His243, and Cys249. The HIT-type zinc finger occupies 215–249; the sequence is CETCGTEEAKYRCPRCMRYSCSLPCVKKHKAELTC. Residue Lys454 forms a Glycyl lysine isopeptide (Lys-Gly) (interchain with G-Cter in SUMO2) linkage.

This sequence belongs to the BCD1 family. Interacts with FBL, SNU13, NOP58, NUFIP1, RUVBL1, RUVBL2 and TAF9. Interacts (via HIT-type zinc finger) with the RUVBL1/RUVBL2 complex in the presence of ADP.

Functionally, required for box C/D snoRNAs accumulation involved in snoRNA processing, snoRNA transport to the nucleolus and ribosome biogenesis. This is Box C/D snoRNA protein 1 (ZNHIT6) from Pongo abelii (Sumatran orangutan).